Here is a 244-residue protein sequence, read N- to C-terminus: Cytochrome c1 (244 aa).

The N-terminal stretch at 1–19 is a signal peptide; the sequence is MRKLILATFLLLAPTALLA. 3 residues coordinate heme c: Cys50, Cys53, and His54. The chain crosses the membrane as a helical span at residues 220-240; the sequence is YVLLFLGFLFILAYLLKKEYW.

As to quaternary structure, the main subunits of complex b-c1 are: cytochrome b, cytochrome c1 and the Rieske protein. Post-translationally, binds 1 heme c group covalently per subunit.

The protein resides in the cell membrane. In terms of biological role, component of the ubiquinol-cytochrome c reductase complex (complex III or cytochrome b-c1 complex), which is a respiratory chain that generates an electrochemical potential coupled to ATP synthesis. c1 functions as an electron donor to cytochrome c. This Allochromatium vinosum (strain ATCC 17899 / DSM 180 / NBRC 103801 / NCIMB 10441 / D) (Chromatium vinosum) protein is Cytochrome c1 (petC).